We begin with the raw amino-acid sequence, 2448 residues long: Non-reducing polyketide synthase mapC (2448 aa).

Positions 14–226 (VLFGPQCPDI…HHEAHREGIQ (213 aa)) are N-terminal acylcarrier protein transacylase domain (SAT). The interval 330–350 (GFSNESPQPSTASLSNSVQTF) is disordered. The region spanning 359–775 (ASPIAITGMA…GSNAALIVKE (417 aa)) is the Ketosynthase family 3 (KS3) domain. Residues C524, H659, and H698 each act as for beta-ketoacyl synthase activity in the active site. Residues 885–1188 (LCFGGQNGLT…HKIDLGGSSG (304 aa)) are malonyl-CoA:ACP transacylase (MAT) domain. S972 (for acyl/malonyl transferase activity) is an active-site residue. The N-terminal hotdog fold stretch occupies residues 1256–1388 (GQEAGLLCQL…GTVCLHQERS (133 aa)). A PKS/mFAS DH domain is found at 1256 to 1565 (GQEAGLLCQL…FTSVSIRSLT (310 aa)). The segment at 1261-1564 (LLCQLSESPD…RFTSVSIRSL (304 aa)) is product template (PT) domain. H1290 (proton acceptor; for dehydratase activity) is an active-site residue. Positions 1414–1565 (ASNGLKGSTV…FTSVSIRSLT (152 aa)) are C-terminal hotdog fold. D1471 acts as the Proton donor; for dehydratase activity in catalysis. Residues 1610–1684 (AKDLATVQEM…GLVEHIFPGH (75 aa)) form the Carrier domain. The residue at position 1644 (S1644) is an O-(pantetheine 4'-phosphoryl)serine. The tract at residues 1841 to 2076 (PYALEHDLLQ…GFEWVDWTNN (236 aa)) is methyltransferase (CMeT) domain. Catalysis depends on for thioesterase activity residues S2227, D2385, and H2417.

Its subcellular location is the cytoplasm. The protein resides in the cytosol. The catalysed reaction is 3 malonyl-CoA + acetyl-CoA + S-adenosyl-L-methionine + H(+) = 5-methylorsellinate + S-adenosyl-L-homocysteine + 3 CO2 + 4 CoA. It participates in secondary metabolite biosynthesis; terpenoid biosynthesis. Its function is as follows. Non-reducing polyketide synthase; part of the gene cluster that mediates the biosynthesis of mycophenolic acid (MPA), the first isolated antibiotic natural product in the world obtained from a culture of Penicillium brevicompactum in 1893. MpaC catalyzes the synthesis of 5-methylorsellinic acid (5MOA) via the condensation of 1 acetyl-CoA starter unit with 3 malonyl-CoA units and one methylation step. The first step of the pathway is the synthesis of 5-methylorsellinic acid (5MOA) by the cytosolic polyketide synthase mpaC. 5MOA is then converted to the phthalide compound 5,7-dihydroxy-4,6-dimethylphthalide (DHMP) by the endoplasmic reticulum-bound cytochrome P450 monooxygenase mpaDE. MpaDE first catalyzes hydroxylation of 5-MOA to 4,6-dihydroxy-2-(hydroxymethyl)-3-methylbenzoic acid (DHMB). MpaDE then acts as a lactone synthase that catalyzes the ring closure to convert DHMB into DHMP. The next step is the prenylation of DHMP by the Golgi apparatus-associated prenyltransferase mpaA to yield farnesyl-DHMP (FDHMP). The ER-bound oxygenase mpaB then mediates the oxidative cleavage the C19-C20 double bond in FDHMP to yield FDHMP-3C via a mycophenolic aldehyde intermediate. The O-methyltransferase mpaG catalyzes the methylation of FDHMP-3C to yield MFDHMP-3C. After the cytosolic methylation of FDHMP-3C, MFDHMP-3C enters into peroxisomes probably via free diffusion due to its low molecular weight. Upon a peroxisomal CoA ligation reaction, catalyzed by a beta-oxidation component enzyme acyl-CoA ligase ACL891, MFDHMP-3C-CoA would then be restricted to peroxisomes for the following beta-oxidation pathway steps. The peroxisomal beta-oxidation machinery than converts MFDHMP-3C-CoA into MPA_CoA, via a beta-oxidation chain-shortening process. Finally mpaH acts as a peroxisomal acyl-CoA hydrolase with high substrate specificity toward MPA-CoA to release the final product MPA. This Penicillium brevicompactum protein is Non-reducing polyketide synthase mapC.